The following is an 846-amino-acid chain: Inactive cap-specific mRNA (nucleoside-2'-O-)-methyltransferase 1B (846 aa).

The interval 30–50 is disordered; it reads DDEDDFVDDPSPTEQKTKAEK. One can recognise a G-patch domain in the interval 44-90; sequence QKTKAEKKMERMGYKAGEGLGKNKQGIQEPIAISFREGKAGLGHEQW. A RrmJ-type SAM-dependent 2'-O-MTase domain is found at 184-413; it reads FFLNRSAMKT…ERFVVCKGLR (230 aa).

The protein is Inactive cap-specific mRNA (nucleoside-2'-O-)-methyltransferase 1B of Caenorhabditis briggsae.